Here is a 217-residue protein sequence, read N- to C-terminus: Glutathione S-transferase U20 (217 aa).

The GST N-terminal domain maps to 3 to 82 (NLPILLDYWP…YVDEAWPEKN (80 aa)). Positions 13, 54, and 67 each coordinate glutathione. Positions 88-208 (DPYGRAQARF…LPDSEKIVAY (121 aa)) constitute a GST C-terminal domain.

The protein belongs to the GST superfamily. Tau family. In terms of assembly, homodimerization. Interacts with JAR1/FIN219 under continuous far red (cFR) light to stimulate JAR1/FIN219 activity and substrate selectivity. In terms of tissue distribution, mostly associated with vascular tissues, especially near hydathodes.

It is found in the nucleus. The protein localises to the cytoplasm. Its subcellular location is the cytosol. It carries out the reaction RX + glutathione = an S-substituted glutathione + a halide anion + H(+). With respect to regulation, activated by JAR1/FIN219. Functionally, exhibits glutathione-dependent thiol transferase activities. Can use glutathione (GSH) and 1-chloro-2,4-dinitrobenzene (CDNB) as substrates. Involved in the regulation of far-red light influence on development. Regulator of the interplay between light and JA signaling by increasing JAR1/FIN219 efficiency. Maybe involved in gravitropic signal transduction. This is Glutathione S-transferase U20 from Arabidopsis thaliana (Mouse-ear cress).